The sequence spans 178 residues: Endothelin-2 (178 aa).

The signal sequence occupies residues 1–24 (MPAPGVHHPNTASPFLKTVAAGKG). A propeptide spanning residues 25 to 46 (QVAAAPEHPAPSARARGSHLRP) is cleaved from the precursor. Intrachain disulfides connect Cys-49–Cys-63 and Cys-51–Cys-59. Residues 70 to 178 (VNTPGQTAPY…RPTHPRRRKR (109 aa)) constitute a propeptide that is removed on maturation. The tract at residues 96–111 (CECSSGGDPACATFCH) is endothelin-like. The disordered stretch occupies residues 156–178 (RFPRRPQEAGRQLRPTHPRRRKR). Over residues 169 to 178 (RPTHPRRRKR) the composition is skewed to basic residues.

It belongs to the endothelin/sarafotoxin family.

Its subcellular location is the secreted. Endothelins are endothelium-derived vasoconstrictor peptides. In Canis lupus familiaris (Dog), this protein is Endothelin-2 (EDN2).